Reading from the N-terminus, the 336-residue chain is G patch domain and ankyrin repeat-containing protein 1 homolog (336 aa).

ANK repeat units follow at residues 123-152 (FGWT…QVET) and 156-185 (SGNT…LEET). A G-patch domain is found at 240-286 (AKNRGLQLMVKQGWDQEHGLGPSQSGRLYPVKTVLRKQRTGLGIEQQ).

The polypeptide is G patch domain and ankyrin repeat-containing protein 1 homolog (Drosophila melanogaster (Fruit fly)).